A 131-amino-acid polypeptide reads, in one-letter code: Small ribosomal subunit protein eS6 (131 aa).

The interval 76–95 (APPGFKPKRKGERRRKTVRG) is disordered. The span at 81-93 (KPKRKGERRRKTV) shows a compositional bias: basic residues.

Belongs to the eukaryotic ribosomal protein eS6 family.

The polypeptide is Small ribosomal subunit protein eS6 (Methanocaldococcus jannaschii (strain ATCC 43067 / DSM 2661 / JAL-1 / JCM 10045 / NBRC 100440) (Methanococcus jannaschii)).